A 361-amino-acid chain; its full sequence is DNA double-strand break repair protein Mre11 (361 aa).

Mn(2+) contacts are provided by Asp7, His9, Asp48, and Asn83. His84 (proton donor) is an active-site residue. 3 residues coordinate Mn(2+): His176, His204, and His206.

This sequence belongs to the MRE11/RAD32 family. Homodimer. Forms a heterotetramer composed of two Mre11 subunits and two Rad50 subunits. Requires Mn(2+) as cofactor.

Nuclease activity is regulated by Rad50. Its function is as follows. Part of the Rad50/Mre11 complex, which is involved in the early steps of DNA double-strand break (DSB) repair. The complex may facilitate opening of the processed DNA ends to aid in the recruitment of HerA and NurA. Mre11 binds to DSB ends and has both double-stranded 3'-5' exonuclease activity and single-stranded endonuclease activity. In Nanoarchaeum equitans (strain Kin4-M), this protein is DNA double-strand break repair protein Mre11.